Reading from the N-terminus, the 626-residue chain is Two-component response regulator ORR24 (626 aa).

Residues 1-22 are disordered; it reads MTVEERQGRVGGHGVSGGGGGR. The segment covering 9–22 has biased composition (gly residues); that stretch reads RVGGHGVSGGGGGR. In terms of domain architecture, Response regulatory spans 30-145; that stretch reads RVLAVDDDPT…QLRTIWQHVI (116 aa). 4-aspartylphosphate is present on aspartate 81. Residues 151 to 162 show a composition bias toward basic and acidic residues; the sequence is DAKNRGNDDDAG. Disordered regions lie at residues 151–215 and 400–440; these read DAKN…KKPR and LQPL…RTTN. Over residues 191-202 the composition is skewed to acidic residues; sequence NGDDGDDSDENS. Residues 210-269 constitute a DNA-binding region (myb-like GARP); that stretch reads TQKKPRVVWSVELHRKFVAAVNQLGIEKAVPKKILDLMNVENITRENVASHLQKYRLYLK. Residues 400-421 are compositionally biased toward polar residues; sequence LQPLESSSQQHLSRVHSSSADP.

The protein belongs to the ARR family. Type-B subfamily. Two-component system major event consists of a His-to-Asp phosphorelay between a sensor histidine kinase (HK) and a response regulator (RR). In plants, the His-to-Asp phosphorelay involves an additional intermediate named Histidine-containing phosphotransfer protein (HPt). This multistep phosphorelay consists of a His-Asp-His-Asp sequential transfer of a phosphate group between first a His and an Asp of the HK protein, followed by the transfer to a conserved His of the HPt protein and finally the transfer to an Asp in the receiver domain of the RR protein.

It is found in the nucleus. Transcriptional activator that binds specific DNA sequence. Functions as a response regulator involved in His-to-Asp phosphorelay signal transduction system. Phosphorylation of the Asp residue in the receiver domain activates the ability of the protein to promote the transcription of target genes. May directly activate some type-A response regulators in response to cytokinins. The polypeptide is Two-component response regulator ORR24 (Oryza sativa subsp. indica (Rice)).